The following is a 431-amino-acid chain: Glucose-1-phosphate adenylyltransferase (431 aa).

Lys39 provides a ligand contact to beta-D-fructose 1,6-bisphosphate. AMP contacts are provided by Arg40, His46, and Arg52. Residue Tyr114 coordinates alpha-D-glucose 1-phosphate. Position 130 (Arg130) interacts with AMP. Residues Gly179, 194 to 195, and Ser212 each bind alpha-D-glucose 1-phosphate; that span reads EK. Arg386 is an AMP binding site. Beta-D-fructose 1,6-bisphosphate contacts are provided by residues 419-423 and 429-431; these read REMLR and QER.

Belongs to the bacterial/plant glucose-1-phosphate adenylyltransferase family. In terms of assembly, homotetramer.

The catalysed reaction is alpha-D-glucose 1-phosphate + ATP + H(+) = ADP-alpha-D-glucose + diphosphate. The protein operates within glycan biosynthesis; glycogen biosynthesis. Its activity is regulated as follows. Allosterically activated by fructose-1,6-bisphosphate (F16BP) and inhibited by AMP. Its function is as follows. Involved in the biosynthesis of ADP-glucose, a building block required for the elongation reactions to produce glycogen. Catalyzes the reaction between ATP and alpha-D-glucose 1-phosphate (G1P) to produce pyrophosphate and ADP-Glc. This chain is Glucose-1-phosphate adenylyltransferase, found in Enterobacter sp. (strain 638).